The primary structure comprises 304 residues: Bifunctional protein FolD 3 (304 aa).

Residues G172–S174, S197, and I238 each bind NADP(+).

It belongs to the tetrahydrofolate dehydrogenase/cyclohydrolase family. Homodimer.

The enzyme catalyses (6R)-5,10-methylene-5,6,7,8-tetrahydrofolate + NADP(+) = (6R)-5,10-methenyltetrahydrofolate + NADPH. It catalyses the reaction (6R)-5,10-methenyltetrahydrofolate + H2O = (6R)-10-formyltetrahydrofolate + H(+). Its pathway is one-carbon metabolism; tetrahydrofolate interconversion. Functionally, catalyzes the oxidation of 5,10-methylenetetrahydrofolate to 5,10-methenyltetrahydrofolate and then the hydrolysis of 5,10-methenyltetrahydrofolate to 10-formyltetrahydrofolate. The sequence is that of Bifunctional protein FolD 3 from Rhizorhabdus wittichii (strain DSM 6014 / CCUG 31198 / JCM 15750 / NBRC 105917 / EY 4224 / RW1) (Sphingomonas wittichii).